We begin with the raw amino-acid sequence, 175 residues long: Interferon gamma (175 aa).

Residues 1 to 23 form the signal peptide; sequence MNATCCILALLLCLTQAISGCYC. Gln-24 carries the post-translational modification Pyrrolidone carboxylic acid. Asn-39 and Asn-106 each carry an N-linked (GlcNAc...) asparagine glycan.

It belongs to the type II (or gamma) interferon family. Homodimer. Interacts with IFNGR1 (via extracellular domain); this interaction promotes IFNGR1 dimerization. As to expression, released primarily from activated T lymphocytes.

The protein resides in the secreted. In terms of biological role, type II interferon produced by immune cells such as T-cells and NK cells that plays crucial roles in antimicrobial, antiviral, and antitumor responses by activating effector immune cells and enhancing antigen presentation. Primarily signals through the JAK-STAT pathway after interaction with its receptor IFNGR1 to affect gene regulation. Upon IFNG binding, IFNGR1 intracellular domain opens out to allow association of downstream signaling components JAK2, JAK1 and STAT1, leading to STAT1 activation, nuclear translocation and transcription of IFNG-regulated genes. Many of the induced genes are transcription factors such as IRF1 that are able to further drive regulation of a next wave of transcription. Plays a role in class I antigen presentation pathway by inducing a replacement of catalytic proteasome subunits with immunoproteasome subunits. In turn, increases the quantity, quality, and repertoire of peptides for class I MHC loading. Increases the efficiency of peptide generation also by inducing the expression of activator PA28 that associates with the proteasome and alters its proteolytic cleavage preference. Up-regulates as well MHC II complexes on the cell surface by promoting expression of several key molecules such as cathepsins B/CTSB, H/CTSH, and L/CTSL. Participates in the regulation of hematopoietic stem cells during development and under homeostatic conditions by affecting their development, quiescence, and differentiation. In Peromyscus maniculatus (North American deer mouse), this protein is Interferon gamma (IFNG).